A 131-amino-acid chain; its full sequence is Ribonuclease P protein component (131 aa).

The protein belongs to the RnpA family. As to quaternary structure, consists of a catalytic RNA component (M1 or rnpB) and a protein subunit.

It catalyses the reaction Endonucleolytic cleavage of RNA, removing 5'-extranucleotides from tRNA precursor.. In terms of biological role, RNaseP catalyzes the removal of the 5'-leader sequence from pre-tRNA to produce the mature 5'-terminus. It can also cleave other RNA substrates such as 4.5S RNA. The protein component plays an auxiliary but essential role in vivo by binding to the 5'-leader sequence and broadening the substrate specificity of the ribozyme. In Synechococcus sp. (strain WH7803), this protein is Ribonuclease P protein component.